Reading from the N-terminus, the 552-residue chain is Non-structural protein NS1 (552 aa).

It belongs to the orbivirus non-structural protein NS1 family.

The sequence is that of Non-structural protein NS1 (Segment-5) from Antilocapra americana (Pronghorn).